The sequence spans 121 residues: Small ribosomal subunit protein uS13 (121 aa).

Positions 91–121 are disordered; the sequence is HRKGLPMRGQRTRTNARTRKGPRKAGVALKK.

The protein belongs to the universal ribosomal protein uS13 family. In terms of assembly, part of the 30S ribosomal subunit. Forms a loose heterodimer with protein S19. Forms two bridges to the 50S subunit in the 70S ribosome.

Functionally, located at the top of the head of the 30S subunit, it contacts several helices of the 16S rRNA. In the 70S ribosome it contacts the 23S rRNA (bridge B1a) and protein L5 of the 50S subunit (bridge B1b), connecting the 2 subunits; these bridges are implicated in subunit movement. Contacts the tRNAs in the A and P-sites. This Cupriavidus necator (strain ATCC 17699 / DSM 428 / KCTC 22496 / NCIMB 10442 / H16 / Stanier 337) (Ralstonia eutropha) protein is Small ribosomal subunit protein uS13.